The following is a 166-amino-acid chain: AP-3 complex subunit sigma (166 aa).

Belongs to the adaptor complexes small subunit family. In terms of assembly, adaptor protein complex 3 (AP-3) is a heterotetramer composed of two large adaptins (delta-type subunit and beta-type subunit), a medium adaptin (mu-type subunit) and a small adaptin (sigma-type subunit).

The protein localises to the cytoplasm. The protein resides in the golgi apparatus. It is found in the cytoplasmic vesicle membrane. In terms of biological role, part of the AP-3 complex, an adaptor-related complex which seems to be clathrin-associated. The complex is associated with the Golgi region as well as more peripheral structures. It facilitates the budding of vesicles from the Golgi membrane and may be directly involved in trafficking to the vacuole. It also function in maintaining the identity of lytic vacuoles and in regulating the transition between storage and lytic vacuoles. The polypeptide is AP-3 complex subunit sigma (Arabidopsis thaliana (Mouse-ear cress)).